Consider the following 461-residue polypeptide: Probable Xaa-Pro aminopeptidase PEPP (461 aa).

The Mn(2+) site is built by Asp257, Asp268, Glu391, and Glu431.

It belongs to the peptidase M24B family. Requires Mn(2+) as cofactor.

The enzyme catalyses Release of any N-terminal amino acid, including proline, that is linked to proline, even from a dipeptide or tripeptide.. Its function is as follows. Catalyzes the removal of a penultimate prolyl residue from the N-termini of peptides. The protein is Probable Xaa-Pro aminopeptidase PEPP (PEPP) of Colletotrichum graminicola (strain M1.001 / M2 / FGSC 10212) (Maize anthracnose fungus).